The chain runs to 147 residues: uncharacterized protein (147 aa).

This is an uncharacterized protein from Saccharomyces cerevisiae (strain ATCC 204508 / S288c) (Baker's yeast).